The chain runs to 212 residues: Ras-like protein (212 aa).

A GTP-binding site is contributed by glycine 15–serine 22. An Effector region motif is present at residues tyrosine 37–tyrosine 45. GTP-binding positions include aspartate 62–glutamine 66 and asparagine 121–aspartate 124. 2 S-palmitoyl cysteine lipidation sites follow: cysteine 205 and cysteine 206. Cysteine 209 is subject to Cysteine methyl ester. Residue cysteine 209 is the site of S-geranylgeranyl cysteine attachment. A propeptide spans isoleucine 210–methionine 212 (removed in mature form).

The protein belongs to the small GTPase superfamily. Ras family.

The protein resides in the cell membrane. The enzyme catalyses GTP + H2O = GDP + phosphate + H(+). Alternates between an inactive form bound to GDP and an active form bound to GTP. Activated by a guanine nucleotide-exchange factor (GEF) and inactivated by a GTPase-activating protein (GAP). The chain is Ras-like protein (rasA) from Emericella nidulans (strain FGSC A4 / ATCC 38163 / CBS 112.46 / NRRL 194 / M139) (Aspergillus nidulans).